The following is a 228-amino-acid chain: UPF0758 protein STER_1430 (228 aa).

Residues Q103 to D225 enclose the MPN domain. Residues H174, H176, and D187 each coordinate Zn(2+). The short motif at H174 to D187 is the JAMM motif element.

Belongs to the UPF0758 family.

The polypeptide is UPF0758 protein STER_1430 (Streptococcus thermophilus (strain ATCC BAA-491 / LMD-9)).